The chain runs to 826 residues: Ribonucleases P/MRP protein subunit POP1 (826 aa).

Disordered stretches follow at residues 1 to 24 (MATTANGNSKKRDGGLSSLAPRKI) and 49 to 91 (NKDF…SGGD). The Nuclear localization signal motif lies at 58 to 65 (KRRRTNSY). The segment covering 70 to 79 (AKKRNIKRQK) has biased composition (basic residues).

As to quaternary structure, component of nuclear RNase P and RNase MRP ribonucleoproteins. RNase P consists of a catalytic RNA moiety and different protein chains. Several subunits of RNase P are also part of the RNase MRP complex. RNase MRP consists of a catalytic RNA moiety and several protein subunits.

The protein resides in the nucleus. The protein localises to the nucleolus. In terms of biological role, component of ribonuclease P, a ribonucleoprotein complex that generates mature tRNA molecules by cleaving their 5'-ends. Also a component of the MRP ribonuclease complex, which cleaves pre-rRNA sequences. Required for rRNA maturation, including 5.8S rRNA processing. The chain is Ribonucleases P/MRP protein subunit POP1 from Arabidopsis thaliana (Mouse-ear cress).